The primary structure comprises 533 residues: Probable intron-encoded endonuclease 3 (533 aa).

3 helical membrane passes run 1 to 21 (MYLS…FFGR), 30 to 50 (LITC…FFEV), and 81 to 101 (LTVA…IYSI). Residues 1–108 (MYLSIIILPL…YSISYMSHDP (108 aa)) are ndh-5 exon 1 encoded. A ndh-5 intron 1 encoded region spans residues 109 to 533 (RGRVRGKRVY…SISLLLGRRR (425 aa)).

It in the N-terminal section; belongs to the complex I subunit 5 family. In the C-terminal section; belongs to the LAGLIDADG endonuclease family.

The protein resides in the mitochondrion membrane. Its function is as follows. Mitochondrial DNA endonuclease involved in intron homing. This chain is Probable intron-encoded endonuclease 3, found in Neurospora crassa (strain ATCC 24698 / 74-OR23-1A / CBS 708.71 / DSM 1257 / FGSC 987).